A 338-amino-acid chain; its full sequence is Phenylalanine--tRNA ligase alpha subunit (338 aa).

E252 contributes to the Mg(2+) binding site.

This sequence belongs to the class-II aminoacyl-tRNA synthetase family. Phe-tRNA synthetase alpha subunit type 1 subfamily. In terms of assembly, tetramer of two alpha and two beta subunits. It depends on Mg(2+) as a cofactor.

The protein resides in the cytoplasm. The enzyme catalyses tRNA(Phe) + L-phenylalanine + ATP = L-phenylalanyl-tRNA(Phe) + AMP + diphosphate + H(+). This Ectopseudomonas mendocina (strain ymp) (Pseudomonas mendocina) protein is Phenylalanine--tRNA ligase alpha subunit.